Reading from the N-terminus, the 119-residue chain is Ribonuclease P protein component (119 aa).

It belongs to the RnpA family. As to quaternary structure, consists of a catalytic RNA component (M1 or rnpB) and a protein subunit.

The catalysed reaction is Endonucleolytic cleavage of RNA, removing 5'-extranucleotides from tRNA precursor.. RNaseP catalyzes the removal of the 5'-leader sequence from pre-tRNA to produce the mature 5'-terminus. It can also cleave other RNA substrates such as 4.5S RNA. The protein component plays an auxiliary but essential role in vivo by binding to the 5'-leader sequence and broadening the substrate specificity of the ribozyme. This chain is Ribonuclease P protein component, found in Escherichia coli O6:H1 (strain CFT073 / ATCC 700928 / UPEC).